We begin with the raw amino-acid sequence, 337 residues long: MPFSISKDTVSNQTTHVATAPASQRPDPVETKVEQEQGRPRLSSRDVVHAYVALTKPRIIELLLVTTLPVMFLASHGVPKLGLVIATMVGGLFAAASANVFNCVIDVDIDQKMRRTRRRPLPRHQVPRRSALIYGIILWIIATIILGFGANWLSAALALIANLFYVFVYSMLLKRRTWQNTIWGGIAGCFPPLIGWTAVTGSVGWEPLVLFFIVFWWTPPHTWALSFRYREDYEAAGVPMLPVVRDAPEVAIQILIYTVMTVAISLVLWPVAHMGWIYVVVAVVSGAVFIVEAAQLLRRANAGLRDALLKPMGLFHWSNTYLSLLFLAIAVDPLIHL.

The segment covering 1–17 (MPFSISKDTVSNQTTHV) has biased composition (polar residues). The interval 1-41 (MPFSISKDTVSNQTTHVATAPASQRPDPVETKVEQEQGRPR) is disordered. The span at 27-41 (DPVETKVEQEQGRPR) shows a compositional bias: basic and acidic residues. Helical transmembrane passes span 59-79 (IIEL…HGVP), 81-101 (LGLV…ANVF), 130-150 (SALI…GFGA), 153-173 (LSAA…SMLL), 196-216 (WTAV…IVFW), 250-270 (VAIQ…VLWP), 271-291 (VAHM…VFIV), and 311-331 (PMGL…AIAV).

It belongs to the UbiA prenyltransferase family. Protoheme IX farnesyltransferase subfamily.

It is found in the cell membrane. It catalyses the reaction heme b + (2E,6E)-farnesyl diphosphate + H2O = Fe(II)-heme o + diphosphate. It functions in the pathway porphyrin-containing compound metabolism; heme O biosynthesis; heme O from protoheme: step 1/1. Functionally, converts heme B (protoheme IX) to heme O by substitution of the vinyl group on carbon 2 of heme B porphyrin ring with a hydroxyethyl farnesyl side group. This chain is Protoheme IX farnesyltransferase, found in Cutibacterium acnes (strain DSM 16379 / KPA171202) (Propionibacterium acnes).